Reading from the N-terminus, the 475-residue chain is 3-isopropylmalate dehydratase large subunit (475 aa).

[4Fe-4S] cluster contacts are provided by cysteine 352, cysteine 412, and cysteine 415.

It belongs to the aconitase/IPM isomerase family. LeuC type 1 subfamily. Heterodimer of LeuC and LeuD. Requires [4Fe-4S] cluster as cofactor.

The catalysed reaction is (2R,3S)-3-isopropylmalate = (2S)-2-isopropylmalate. The protein operates within amino-acid biosynthesis; L-leucine biosynthesis; L-leucine from 3-methyl-2-oxobutanoate: step 2/4. In terms of biological role, catalyzes the isomerization between 2-isopropylmalate and 3-isopropylmalate, via the formation of 2-isopropylmaleate. This is 3-isopropylmalate dehydratase large subunit from Gluconobacter oxydans (strain 621H) (Gluconobacter suboxydans).